The primary structure comprises 305 residues: Ribonuclease BN (305 aa).

Zn(2+) is bound by residues His-64, His-66, Asp-68, His-69, His-141, Asp-212, and His-270. The Proton acceptor role is filled by Asp-68.

Belongs to the RNase Z family. RNase BN subfamily. In terms of assembly, homodimer. The cofactor is Zn(2+).

Functionally, zinc phosphodiesterase, which has both exoribonuclease and endoribonuclease activities. This chain is Ribonuclease BN, found in Escherichia coli O6:K15:H31 (strain 536 / UPEC).